Consider the following 535-residue polypeptide: CTP synthase (535 aa).

An amidoligase domain region spans residues 1–267 (MTKYIFVTGG…DQIVCDHLKL (267 aa)). Ser13 contributes to the CTP binding site. Residue Ser13 participates in UTP binding. 14–19 (SLGKGI) contacts ATP. Residue Tyr54 participates in L-glutamine binding. Asp71 is a binding site for ATP. Mg(2+)-binding residues include Asp71 and Glu141. CTP is bound by residues 148-150 (DIE), 188-193 (KTKPTQ), and Lys224. UTP is bound by residues 188–193 (KTKPTQ) and Lys224. 240-242 (RDA) contributes to the ATP binding site. The Glutamine amidotransferase type-1 domain maps to 292–534 (KIALVGKYVE…VRASITNKES (243 aa)). Gly354 serves as a coordination point for L-glutamine. Cys381 (nucleophile; for glutamine hydrolysis) is an active-site residue. Residues 382 to 385 (LGMQ), Glu405, and Arg462 each bind L-glutamine. Residues His507 and Glu509 contribute to the active site.

It belongs to the CTP synthase family. Homotetramer.

It catalyses the reaction UTP + L-glutamine + ATP + H2O = CTP + L-glutamate + ADP + phosphate + 2 H(+). The enzyme catalyses L-glutamine + H2O = L-glutamate + NH4(+). It carries out the reaction UTP + NH4(+) + ATP = CTP + ADP + phosphate + 2 H(+). The protein operates within pyrimidine metabolism; CTP biosynthesis via de novo pathway; CTP from UDP: step 2/2. Its activity is regulated as follows. Allosterically activated by GTP, when glutamine is the substrate; GTP has no effect on the reaction when ammonia is the substrate. The allosteric effector GTP functions by stabilizing the protein conformation that binds the tetrahedral intermediate(s) formed during glutamine hydrolysis. Inhibited by the product CTP, via allosteric rather than competitive inhibition. Catalyzes the ATP-dependent amination of UTP to CTP with either L-glutamine or ammonia as the source of nitrogen. Regulates intracellular CTP levels through interactions with the four ribonucleotide triphosphates. This chain is CTP synthase, found in Bacillus cereus (strain ATCC 14579 / DSM 31 / CCUG 7414 / JCM 2152 / NBRC 15305 / NCIMB 9373 / NCTC 2599 / NRRL B-3711).